Reading from the N-terminus, the 364-residue chain is MRAILFGGGLALLVSLLGTRVAINQFTRLGYGQEIRDDGPTSHHTKRGTPTMGGVVIILATVVGYFGAKLITGDMPTASALLLLFLLVGTGLVGFVDDFIKISKQRSLGLRSKAKMIGLTVVALVFGILSLSSWLEDDRGQSPASRHISFIRDIGWITLPTVVVLLLIWLIIAATSNGVNLTDGLDGLATGASVMVFGAYMFVNIWQNNQWCGQTGLDQPNLCYEVRDPLDLAVVAAAITGACFGFLWWNASPAAIFMGDTGSLALGGALAGLAILTRTELLLIILGGLFVMETVSVMLQVATFKATKRLTGTGRRLFRIAPIHHHFEMLGWEQVTVVIRFWIITGICVAAGLGVFYAEWVAGI.

Transmembrane regions (helical) follow at residues 3–23, 51–71, 80–100, 116–136, 154–174, 185–205, 229–249, 256–276, 281–301, and 341–361; these read AILFGGGLALLVSLLGTRVAI, TMGGVVIILATVVGYFGAKLI, ALLLLFLLVGTGLVGFVDDFI, MIGLTVVALVFGILSLSSWLE, IGWITLPTVVVLLLIWLIIAA, LDGLATGASVMVFGAYMFVNI, PLDLAVVAAAITGACFGFLWW, IFMGDTGSLALGGALAGLAIL, LLLIILGGLFVMETVSVMLQV, and FWIITGICVAAGLGVFYAEWV.

The protein belongs to the glycosyltransferase 4 family. MraY subfamily. It depends on Mg(2+) as a cofactor.

The protein localises to the cell membrane. The catalysed reaction is UDP-N-acetyl-alpha-D-muramoyl-L-alanyl-gamma-D-glutamyl-meso-2,6-diaminopimeloyl-D-alanyl-D-alanine + di-trans,octa-cis-undecaprenyl phosphate = di-trans,octa-cis-undecaprenyl diphospho-N-acetyl-alpha-D-muramoyl-L-alanyl-D-glutamyl-meso-2,6-diaminopimeloyl-D-alanyl-D-alanine + UMP. It functions in the pathway cell wall biogenesis; peptidoglycan biosynthesis. Functionally, catalyzes the initial step of the lipid cycle reactions in the biosynthesis of the cell wall peptidoglycan: transfers peptidoglycan precursor phospho-MurNAc-pentapeptide from UDP-MurNAc-pentapeptide onto the lipid carrier undecaprenyl phosphate, yielding undecaprenyl-pyrophosphoryl-MurNAc-pentapeptide, known as lipid I. This chain is Phospho-N-acetylmuramoyl-pentapeptide-transferase, found in Nocardioides sp. (strain ATCC BAA-499 / JS614).